The sequence spans 394 residues: Protein TsgA homolog (394 aa).

12 consecutive transmembrane segments (helical) span residues 11 to 31 (WISY…GMVM), 51 to 71 (FLNA…EIIP), 76 to 96 (LVFG…GHNL), 101 to 121 (ISMF…TFLI), 134 to 154 (LLFT…AAAI), 162 to 182 (WYWV…LTLC), 206 to 226 (MGVL…LGFI), 246 to 266 (QLVS…SFIL), 274 to 294 (IVTV…STNN), 302 to 322 (ILAL…LGSL), 334 to 354 (FILT…GPIV), and 363 to 383 (LATA…LGFF).

This sequence belongs to the major facilitator superfamily. TsgA family.

Its subcellular location is the cell inner membrane. The sequence is that of Protein TsgA homolog from Yersinia enterocolitica serotype O:8 / biotype 1B (strain NCTC 13174 / 8081).